Reading from the N-terminus, the 1128-residue chain is Membrane-associated guanylate kinase, WW and PDZ domain-containing protein 3 (1128 aa).

Residues 22 to 108 (WGGPAGPDPE…PVRLKTVRPG (87 aa)) enclose the PDZ 1 domain. Residues 116-290 (RHYLSLQFQK…SMDFRNYMSR (175 aa)) form the Guanylate kinase-like domain. Residue 123-130 (FQKGSIDH) participates in ATP binding. The tract at residues 184 to 276 (TYDGNFYGTP…DWMKPVPSYN (93 aa)) is disordered. Over residues 193–204 (PKPPAEPSPFQP) the composition is skewed to pro residues. Residues 238 to 247 (LPEDEEEEEK) show a composition bias toward acidic residues. Residues 257-267 (ENKEKHSDSSD) show a composition bias toward basic and acidic residues. 2 consecutive WW domains span residues 295-328 (EPLP…DPRL) and 341-374 (GELP…NPVL). 2 PDZ domains span residues 412–494 (RTSL…TLCR) and 581–657 (TIPL…LILR). Residues 658 to 688 (GGPPSPTKTGKMKDKQESSGSLEALSDAIPQ) form a disordered region. PDZ domains follow at residues 728–810 (DVFL…TVRR) and 852–939 (DVCL…VAEE). 2 disordered regions span residues 939–985 (EEHR…GKEV) and 999–1018 (LAQP…SQAQ). Composition is skewed to polar residues over residues 946–956 (SGTNSAKQSPA) and 965–974 (AQSSASSTDR). A PDZ 6 domain is found at 1024-1106 (PVELERGPRG…KVLLLLRPGT (83 aa)).

Belongs to the MAGUK family.

The protein resides in the cell membrane. It is found in the cell junction. It localises to the tight junction. Its function is as follows. Acts as a scaffolding protein at cell-cell junctions, thereby regulating various cellular and signaling processes. This Gallus gallus (Chicken) protein is Membrane-associated guanylate kinase, WW and PDZ domain-containing protein 3 (MAGI3).